A 463-amino-acid chain; its full sequence is Fumarate hydratase class II (463 aa).

Residues 95 to 97 (SGT), 126 to 129 (HPND), 136 to 138 (SSN), and Thr-184 contribute to the substrate site. His-185 (proton donor/acceptor) is an active-site residue. Ser-315 is an active-site residue. Substrate contacts are provided by residues Ser-316 and 321–323 (KIN).

The protein belongs to the class-II fumarase/aspartase family. Fumarase subfamily. In terms of assembly, homotetramer.

It localises to the cytoplasm. The enzyme catalyses (S)-malate = fumarate + H2O. It functions in the pathway carbohydrate metabolism; tricarboxylic acid cycle; (S)-malate from fumarate: step 1/1. Involved in the TCA cycle. Catalyzes the stereospecific interconversion of fumarate to L-malate. The sequence is that of Fumarate hydratase class II from Chlamydia trachomatis serovar D (strain ATCC VR-885 / DSM 19411 / UW-3/Cx).